The following is a 287-amino-acid chain: 2-dehydro-3-deoxyphosphooctonate aldolase (287 aa).

It belongs to the KdsA family.

It is found in the cytoplasm. It catalyses the reaction D-arabinose 5-phosphate + phosphoenolpyruvate + H2O = 3-deoxy-alpha-D-manno-2-octulosonate-8-phosphate + phosphate. Its pathway is carbohydrate biosynthesis; 3-deoxy-D-manno-octulosonate biosynthesis; 3-deoxy-D-manno-octulosonate from D-ribulose 5-phosphate: step 2/3. It participates in bacterial outer membrane biogenesis; lipopolysaccharide biosynthesis. This is 2-dehydro-3-deoxyphosphooctonate aldolase from Bradyrhizobium sp. (strain ORS 278).